The primary structure comprises 1168 residues: Transcription-repair-coupling factor (1168 aa).

The Helicase ATP-binding domain occupies 633 to 794 (DMQKSRPMDR…MLGVRDLSVI (162 aa)). 646-653 (GDVGYGKT) contributes to the ATP binding site. Positions 747–750 (DEEQ) match the DEEQ box motif. Positions 808-969 (VLEQNMSFIK…GFKIAMRDLN (162 aa)) constitute a Helicase C-terminal domain.

It in the N-terminal section; belongs to the UvrB family. In the C-terminal section; belongs to the helicase family. RecG subfamily.

It is found in the cytoplasm. Functionally, couples transcription and DNA repair by recognizing RNA polymerase (RNAP) stalled at DNA lesions. Mediates ATP-dependent release of RNAP and its truncated transcript from the DNA, and recruitment of nucleotide excision repair machinery to the damaged site. This is Transcription-repair-coupling factor from Staphylococcus aureus (strain MRSA252).